Consider the following 225-residue polypeptide: 2-C-methyl-D-erythritol 4-phosphate cytidylyltransferase (225 aa).

It belongs to the IspD/TarI cytidylyltransferase family. IspD subfamily.

The catalysed reaction is 2-C-methyl-D-erythritol 4-phosphate + CTP + H(+) = 4-CDP-2-C-methyl-D-erythritol + diphosphate. It participates in isoprenoid biosynthesis; isopentenyl diphosphate biosynthesis via DXP pathway; isopentenyl diphosphate from 1-deoxy-D-xylulose 5-phosphate: step 2/6. Functionally, catalyzes the formation of 4-diphosphocytidyl-2-C-methyl-D-erythritol from CTP and 2-C-methyl-D-erythritol 4-phosphate (MEP). The chain is 2-C-methyl-D-erythritol 4-phosphate cytidylyltransferase from Prochlorococcus marinus (strain MIT 9313).